A 90-amino-acid polypeptide reads, in one-letter code: Probable Fe(2+)-trafficking protein (90 aa).

This sequence belongs to the Fe(2+)-trafficking protein family.

Could be a mediator in iron transactions between iron acquisition and iron-requiring processes, such as synthesis and/or repair of Fe-S clusters in biosynthetic enzymes. This Pseudomonas fluorescens (strain SBW25) protein is Probable Fe(2+)-trafficking protein.